Consider the following 148-residue polypeptide: MEFLSGYFLWVKAFHVIAVISWMAALFYLPRLFVYHAENAHKKEFVGVVQIQEKKLYSFIASPAMGFTLITGILMLLIAPEMFKSGGWLHAKLALVVLLLIYHFYCKKCMRELEKDPTGKNARFYRVFNEIPTILMILIVILVVVKPF.

4 helical membrane-spanning segments follow: residues 7–27 (YFLWVKAFHVIAVISWMAALF), 59–79 (FIASPAMGFTLITGILMLLIA), 86–106 (GGWLHAKLALVVLLLIYHFYC), and 128–148 (FNEIPTILMILIVILVVVKPF). His15 contributes to the heme binding site. Heme is bound at residue Lys92.

It belongs to the HemJ family. In terms of assembly, homodimer. Requires heme b as cofactor.

It is found in the cell membrane. It catalyses the reaction protoporphyrinogen IX + 3 A = protoporphyrin IX + 3 AH2. It participates in porphyrin-containing compound metabolism; protoporphyrin-IX biosynthesis; protoporphyrin-IX from protoporphyrinogen-IX: step 1/1. Functionally, catalyzes the oxidation of protoporphyrinogen IX to protoporphyrin IX. Is involved in the biosynthesis of tetrapyrrole molecules like heme. Does not use oxygen or artificial electron acceptors such as menadione or benzoquinone. This is Protoporphyrinogen IX oxidase from Helicobacter pylori (strain J99 / ATCC 700824) (Campylobacter pylori J99).